The following is a 126-amino-acid chain: Topoisomerase I damage affected protein 8 (126 aa).

The PA14 domain occupies M1–G110.

Belongs to the flocculin family.

The chain is Topoisomerase I damage affected protein 8 (TDA8) from Saccharomyces cerevisiae (strain ATCC 204508 / S288c) (Baker's yeast).